We begin with the raw amino-acid sequence, 606 residues long: UvrABC system protein C (606 aa).

The GIY-YIG domain occupies 14-93 (QNPGVYLMKD…IKKHSPRYNV (80 aa)). A UVR domain is found at 203 to 238 (PDLINRLKFEMQTEADLEHFERAAQIRDTILAIQTT).

The protein belongs to the UvrC family. Interacts with UvrB in an incision complex.

Its subcellular location is the cytoplasm. Functionally, the UvrABC repair system catalyzes the recognition and processing of DNA lesions. UvrC both incises the 5' and 3' sides of the lesion. The N-terminal half is responsible for the 3' incision and the C-terminal half is responsible for the 5' incision. The chain is UvrABC system protein C from Desulforapulum autotrophicum (strain ATCC 43914 / DSM 3382 / VKM B-1955 / HRM2) (Desulfobacterium autotrophicum).